The sequence spans 214 residues: MNVFRILGDLSHLLAMILLLVKIWRSKSCAGISGKSQILFALVFTTRYLDLFSNFISIYNTVMKVVFLLCAYVTVYMIYWKFRKTFDIENDTFRLEFLLVPVTGLSFLVNYSYTPMEVLWTFSIYLESVAILPQLFMISKTGEAETITTHYLFFLGLYRLLYLANWIRRYQTENFYDQISVVSGVVQTIFYCDFFYLYVTKVLKGKKLSLPVPV.

Topologically, residues Met1–Phe4 are lumenal. The helical transmembrane segment at Arg5 to Trp24 threads the bilayer. Residues Arg25–Ile32 are Cytoplasmic-facing. Residues Ser33–Phe52 traverse the membrane as a helical segment. The interval Arg47–Tyr48 is interaction with the K-D-E-L motif on target proteins. At Ser53–Ile58 the chain is on the lumenal side. Residues Tyr59–Tyr79 traverse the membrane as a helical segment. At Trp80–Thr92 the chain is on the cytoplasmic side. A helical transmembrane segment spans residues Phe93–Asn110. At Tyr111 to Met116 the chain is on the lumenal side. Residues Glu117–Leu135 form a helical membrane-spanning segment. At Phe136 to Thr149 the chain is on the cytoplasmic side. The chain crosses the membrane as a helical span at residues His150–Arg168. The interval Arg159–Arg169 is interaction with the K-D-E-L motif on target proteins. Over Arg169 to Gln178 the chain is Lumenal. Residues Ile179–Val199 form a helical membrane-spanning segment. At Thr200–Val214 the chain is on the cytoplasmic side. An important for recycling of cargo proteins with the sequence motif K-D-E-L from the Golgi to the endoplasmic reticulum region spans residues Lys204–Lys207.

Belongs to the ERD2 family.

The protein resides in the endoplasmic reticulum membrane. Its subcellular location is the golgi apparatus membrane. It localises to the cytoplasmic vesicle. It is found in the COPI-coated vesicle membrane. Receptor for the C-terminal sequence motif K-D-E-L that is present on endoplasmic reticulum resident proteins and that mediates their recycling from the Golgi back to the endoplasmic reticulum. The polypeptide is ER lumen protein-retaining receptor 3 (Kdelr3) (Mus musculus (Mouse)).